Here is a 2344-residue protein sequence, read N- to C-terminus: Mucin-4 (2344 aa).

The N-terminal stretch at 1 to 30 (MRGPHGVSWRVPWLCLSCLCSCLLLLPVNT) is a signal peptide. The segment covering 32–46 (TTSAPKTSTALPSST) has biased composition (low complexity). Disordered stretches follow at residues 32-760 (TTSA…QGSI), 773-1036 (QKMS…TTST), 1072-1130 (VPSL…TPSV), 1171-1197 (STVA…MGAS), and 1233-1269 (SGLT…TVPP). Over residues 47-100 (NPSQMTSQVSNPTASSYRMTKNTGQASPMVTSSSITTLPQSQHTGSMKTTRNPQ) the composition is skewed to polar residues. Residues 81-1006 (ITTLPQSQHT…VSTLVTSTQE (926 aa)) are variable number of tandem repeats (VNTR). Low complexity-rich tracts occupy residues 101–116 (TTGT…ASSS) and 123–137 (TTSQ…TTTS). Thr133 carries an O-linked (GalNAc...) threonine glycan. The span at 142–225 (ESSSPPSTSV…GGMKTTRNPQ (84 aa)) shows a compositional bias: polar residues. Over residues 226 to 273 (TTGTTEVTTTLSASSSDHPTSSPESTPGNTAPRTTETSTTTTTKVLMT) the composition is skewed to low complexity. Residues 274 to 305 (SLQQKLPTGSTLGTSTQELTTLPQSQHTGIMK) show a composition bias toward polar residues. Low complexity-rich tracts occupy residues 306-322 (TTSR…TTRT) and 335-349 (TSSQ…TTTS). Residues 373–436 (SGDTGHTMAV…GMKTTRNPQR (64 aa)) show a composition bias toward polar residues. Residues Thr391 and Thr392 are each glycosylated (O-linked (GalNAc...) threonine). Low complexity predominate over residues 437-446 (TTPTEVTTST). Over residues 447–468 (LSASSSDQVQVETTSRATLSPD) the composition is skewed to polar residues. Positions 469–492 (TTTTSHAPSVSSSSPSPPSTEGTS) are enriched in low complexity. O-linked (GalNAc...) threonine glycosylation is present at Thr470. A glycan (O-linked (GalNAc...) serine) is linked at Ser479. Positions 493–509 (VDTGLTTAVTTQDSTPA) are enriched in polar residues. Positions 510-546 (TTQGSLTSSSQTLSTVSPLSTSTQETSTQELTSSQSQ) are enriched in low complexity. A compositionally biased stretch (polar residues) spans 547–580 (HTGSMKTTHNPQTTRNTEVTTTLSASSSDQVQVE). The segment covering 581 to 594 (TTSQTTLSDATTTS) has biased composition (low complexity). Polar residues predominate over residues 599–682 (ESSSPPSTSD…GGMKTTRNPQ (84 aa)). 2 stretches are compositionally biased toward low complexity: residues 683–698 (TTGT…ASSS) and 705–719 (TSSQ…TTTS). 2 stretches are compositionally biased toward polar residues: residues 724-760 (ESSS…QGSI) and 773-807 (QKMS…SSRP). Positions 808 to 828 (QTTSVTSTLSSSPSGSTPVQT) are enriched in low complexity. Residues 829–868 (RSVTSSSDERTNPTSSGVSNTSPATTEVLTPTSSPESTPG) are compositionally biased toward polar residues. Positions 869-915 (NTAPRTTETSTTTTTKVLMTSLQQKLPTGSTLGTSTPTEVTTTLSAS) are enriched in low complexity. A compositionally biased stretch (polar residues) spans 916–994 (SSDQVQVETT…ISVTPSTQKM (79 aa)). Residues 995-1015 (STVSTLVTSTQELTSSQSQRT) show a composition bias toward low complexity. Residues 1016–1026 (GSMGTSSKPQA) are compositionally biased toward polar residues. Over residues 1027-1036 (TTPTEVTTST) the composition is skewed to low complexity. Polar residues predominate over residues 1072 to 1083 (VPSLMHSSKPQA). Positions 1084–1096 (TTPTEVTTSTLSS) are enriched in low complexity. Over residues 1097–1116 (FSRGSTQTQTVSWETSSSGK) the composition is skewed to polar residues. Low complexity-rich tracts occupy residues 1118-1130 (TAPS…TPSV), 1175-1188 (HRQS…HSQS), and 1233-1267 (SGLT…RSTV). The NIDO domain occupies 1332 to 1492 (GHSGVMLISL…TGYTGRCGPT (161 aa)). The interval 1574–1597 (GRHRTGLAAGTTSPLSASSTSSGG) is disordered. Positions 1580–1597 (LAAGTTSPLSASSTSSGG) are enriched in low complexity. The VWFD domain maps to 1609-1804 (RPAWTFGDPH…HYGMTSETNG (196 aa)). Residues Asn1644, Asn1660, Asn1672, Asn1689, Asn1698, Asn1704, Asn1715, Asn1724, Asn1759, Asn1780, Asn1787, Asn1829, Asn1874, Asn1926, Asn1951, Asn1974, Asn1981, Asn2029, and Asn2048 are each glycosylated (N-linked (GlcNAc...) asparagine). Residues 2047–2086 (QNHSCPVNYCYNHGHCDISGPPDCQPTCTCAPAFTGNRCF) enclose the EGF-like 1 domain. 3 disulfide bridges follow: Cys2051-Cys2062, Cys2056-Cys2074, and Cys2076-Cys2085. N-linked (GlcNAc...) asparagine glycosylation is found at Asn2114 and Asn2121. Residues 2173–2193 (GPLIHYLNNQLISAVMEAFLL) traverse the membrane as a helical segment. The N-linked (GlcNAc...) asparagine glycan is linked to Asn2227. The EGF-like 2 domain maps to 2256 to 2295 (VSPCSEGYCHNGGQCKHLPDGPQCTCATFSIYTSWGERCE). 3 disulfide bridges follow: Cys2259/Cys2270, Cys2264/Cys2279, and Cys2281/Cys2294. Residues 2301 to 2321 (LGAFFGILFGALGALLLLAIL) form a helical membrane-spanning segment.

A heterodimeric complex, composed of a mucin-4 alpha chain and a cysteine-rich transmembrane mucin-4 beta chain. Mucin-4 beta chain interacts with ERBB2 via the EGF-like domain 1. In nonpolarized cells, associates with ERBB2 and ERBB3. Post-translationally, proteolytically cleaved into 2 subunits, mucin-4 alpha chain and mucin-4 beta chain. Mucin-4 alpha subunit is highly O-glycosylated. In terms of processing, mucin-4 beta subunit is predominantly N-glycosylated. In terms of tissue distribution, expression is developmentally regulated in the mammary gland, dramatically increases in the lactating gland compared with the virgin mammary gland, while decreasing again during mammary gland involution. Expressed in 13762 ascites cells. Overexpressed in some aggressive mammary tumors. Overexpression seems to block cell-cell and cell-matrix interactions to protect tumor cells from immune surveillance, and to promote metastasis.

Its subcellular location is the cell membrane. The protein localises to the secreted. Functionally, membrane-bound mucin, a family of highly glycosylated proteins that constitute the major component of the mucus, the slimy and viscous secretion covering epithelial surfaces. These glycoproteins play important roles in the protection of the epithelium and are implicated in epithelial renewal and differentiation. Regulates cellular behavior through both anti-adhesive effects on cell-cell and cell-extracellular matrix interactions and its ability to act as an intramembrane ligand for ERBB2. Plays an important role in proliferation and differentiation of epithelial cells by inducing specific phosphorylation of ERBB2. In polarized epithelial cells, segregates ERBB2 and other ERBB receptors and prevents ERBB2 from acting as a coreceptor. The interaction with ERBB2 leads to enhanced expression of CDKN1B. The formation of a MUC4-ERBB2-ERBB3-NRG1 complex leads to down-regulation of CDKN1B, resulting in repression of apoptosis and stimulation of proliferation. Its ability to promote tumor growth may be mainly due to repression of apoptosis as opposed to proliferation. The protein is Mucin-4 (Muc4) of Rattus norvegicus (Rat).